A 393-amino-acid chain; its full sequence is uncharacterized protein (393 aa).

This is an uncharacterized protein from Treponema pallidum (strain Nichols).